The chain runs to 453 residues: Protein vestigial (453 aa).

Residues 145–279 (AAGHSLHSSH…GGGLAGSGQG (135 aa)) are disordered. Residues 151 to 177 (HSSHRTHAHSLAHAHTHPHSHTHTHTH) show a composition bias toward basic residues. Residues 178–193 (QTKEEDLIVPRSEAEA) are compositionally biased toward basic and acidic residues. Composition is skewed to gly residues over residues 227 to 253 (HGGG…GGTG) and 267 to 278 (GSGGGGLAGSGQ). The tract at residues 279 to 335 (GQAQYLSASCVVFTNYSGDTASQVDEHFSRALNYNNKDSKESSSPMSNRNFPPSFWN) is ser-rich sd binding domain.

As to quaternary structure, the Ser-rich protein domain within the C-terminal region interacts with the C-terminus of sd to form a complex which acts as a selector for wing development. Interacts with Dhfr. As to expression, expressed in the developing wing primordia initially along the D/V wing boundary, and by the late third larval instar, maximal expression is seen in cells at the D/V wing disk boundary. Less expression is seen in cells located farther from this boundary.

The protein localises to the nucleus. Functionally, involved in determining which thoracic imaginal disk cells will form wings and halteres, perhaps by interacting with other nuclear regulatory proteins. When in combination with scalloped (sd), it acts as a transcriptional activation complex that regulates gene expression in the wing. Binding to sd switches the DNA target selectivity of sd. Required and sufficient for cell proliferation at the dorsal/ventral (D/V) boundary of the wing imaginal disk. Also required for cell proliferation in the wing imaginal disk, mediated via activation of E2f. By interacting with Dhfr, may control genes involved in DNA replication. This chain is Protein vestigial (vg), found in Drosophila melanogaster (Fruit fly).